The sequence spans 421 residues: UDP-N-acetylglucosamine 1-carboxyvinyltransferase (421 aa).

22–23 contacts phosphoenolpyruvate; sequence KN. A UDP-N-acetyl-alpha-D-glucosamine-binding site is contributed by Arg93. Residue Cys117 is the Proton donor of the active site. Position 117 is a 2-(S-cysteinyl)pyruvic acid O-phosphothioketal (Cys117). Residues 122-126, Asp308, and Ile330 each bind UDP-N-acetyl-alpha-D-glucosamine; that span reads RPVDL.

The protein belongs to the EPSP synthase family. MurA subfamily.

Its subcellular location is the cytoplasm. It carries out the reaction phosphoenolpyruvate + UDP-N-acetyl-alpha-D-glucosamine = UDP-N-acetyl-3-O-(1-carboxyvinyl)-alpha-D-glucosamine + phosphate. Its pathway is cell wall biogenesis; peptidoglycan biosynthesis. Cell wall formation. Adds enolpyruvyl to UDP-N-acetylglucosamine. The sequence is that of UDP-N-acetylglucosamine 1-carboxyvinyltransferase from Pseudomonas fluorescens (strain Pf0-1).